The primary structure comprises 387 residues: Growth-regulating factor 3 (387 aa).

A QLQ domain is found at 53–88; that stretch reads PFTAAQYEELEQQALIYKYLVAGVPVPADLLLPIRR. Short sequence motifs (bipartite nuclear localization signal) lie at residues 111-129 and 147-154; these read KKLD…KKWR and RGRNRSRK. Residues 114–158 form the WRC domain; sequence DPEPGRCRRTDGKKWRCSKEAAPDSKYCERHMHRGRNRSRKPVEA. The disordered stretch occupies residues 145–176; that stretch reads MHRGRNRSRKPVEAQLVAPHSQPPATAPAAAV.

Belongs to the GRF family.

It is found in the nucleus. Its function is as follows. Transcription activator that plays a regulatory role in gibberellin-induced stem elongation. The chain is Growth-regulating factor 3 (GRF3) from Oryza sativa subsp. japonica (Rice).